Reading from the N-terminus, the 299-residue chain is HTH-type transcriptional regulator ArgP (299 aa).

The 57-residue stretch at 4 to 60 (LDYKLLLALDAVMQEQNFERAAQRLHITQSAISQRIKQLEQQFAEPLLIRSQPLQAT) folds into the HTH lysR-type domain. Positions 21–40 (FERAAQRLHITQSAISQRIK) form a DNA-binding region, H-T-H motif.

It belongs to the LysR transcriptional regulatory family. As to quaternary structure, homodimer.

In terms of biological role, controls the transcription of genes involved in arginine and lysine metabolism. This chain is HTH-type transcriptional regulator ArgP, found in Aeromonas salmonicida.